The primary structure comprises 302 residues: Chloramphenicol resistance protein (302 aa).

The protein localises to the cell membrane. This protein is thought to be a membrane-associated barrier of drug uptake. This chain is Chloramphenicol resistance protein (cml), found in Escherichia coli.